Reading from the N-terminus, the 455-residue chain is Anthocyanidin 3-O-glucosyltransferase (455 aa).

The Proton acceptor role is filled by histidine 18. Residue histidine 18 coordinates an anthocyanidin. Catalysis depends on aspartate 118, which acts as the Charge relay. Threonine 139 provides a ligand contact to UDP-alpha-D-glucose. Histidine 148 lines the an anthocyanidin pocket. UDP-alpha-D-glucose contacts are provided by alanine 336, glutamine 338, histidine 353, tryptophan 356, serine 358, and glutamate 361. Glycine 376 is a binding site for an anthocyanidin. Aspartate 377 and glutamine 378 together coordinate UDP-alpha-D-glucose.

This sequence belongs to the UDP-glycosyltransferase family.

The enzyme catalyses an anthocyanidin + UDP-alpha-D-glucose + H(+) = an anthocyanidin 3-O-beta-D-glucoside + UDP. It participates in pigment biosynthesis; anthocyanin biosynthesis. In terms of biological role, in the presence of other necessary color factors, this glycosylation reaction allows the accumulation of anthocyanin pigments. In Hordeum vulgare (Barley), this protein is Anthocyanidin 3-O-glucosyltransferase (BZ1).